The chain runs to 169 residues: Large ribosomal subunit protein uL10 (169 aa).

The protein belongs to the universal ribosomal protein uL10 family. Part of the ribosomal stalk of the 50S ribosomal subunit. The N-terminus interacts with L11 and the large rRNA to form the base of the stalk. The C-terminus forms an elongated spine to which L12 dimers bind in a sequential fashion forming a multimeric L10(L12)X complex.

Its function is as follows. Forms part of the ribosomal stalk, playing a central role in the interaction of the ribosome with GTP-bound translation factors. The protein is Large ribosomal subunit protein uL10 of Staphylococcus saprophyticus subsp. saprophyticus (strain ATCC 15305 / DSM 20229 / NCIMB 8711 / NCTC 7292 / S-41).